A 697-amino-acid chain; its full sequence is MMRPVVVKEKRVNESQIHAVEDEVRQAKTMDRDIVTHAMKQSFAKLNPKVMIKNPIMFVVEIGFIITLILSFLPSSSSSVPGWFNITVSLILLFTVLFANFAEALAEGRGKAQADSLKQSKKDVFANVVKENGDIVQVSATDLRKGDIVIVKQGEMIPNDGEVIKGLASVDESAITGESAPVIKEAGGDFCSVTGGTMVVSDEITIVITSNPGESFIDKMISLVEGAARQKTPNEIALNTVLTSLTLIFLIVVVTLPIFTNYLGFQIDTAVLVALLVCLIPTTIGGLLSAIGIAGMDRVTKFNVLAMSGKAVEAAGDINTIILDKTGTITFGNRMAHTLLPVGNETIEQVGKWAAISSVLDETPEGRSVIEYVQTKSISYNREIAEQGEFVPFKAETRMSGVDLQDGTKVRKGAVGAVIEWVQSQGGMIPKDVNQKADLISKEGGTPLVVAVDNRIYGLIYLKDTVKPGMRERFEQLRQMGIKTVMCTGDNPLTAATIAKEAGVDEFVAECKPEDKIAVIKAEQDKGKLVAMTGDGTNDAPALAQADVGLAMNSGTTAAKEAANMIDLDSNPTKIIEVVGIGKQLLMTRGALTTFSIANDIAKYFAIIPAMFTLAIPQMEALNIMKLTSPLSAILSALIFNAVIIPLLIPLAMKGIAYKPMSSNALLSRNLLIYGLGGVIVPFIGIKVIDMIVGLFI.

4 consecutive transmembrane segments (helical) span residues 55 to 75, 82 to 102, 245 to 265, and 271 to 291; these read PIMF…FLPS, GWFN…ANFA, LTLI…YLGF, and VLVA…LSAI. The 4-aspartylphosphate intermediate role is filled by Asp324. ATP is bound by residues Asp361, Glu365, 393-400, and Lys412; that span reads FKAETRMS. Mg(2+)-binding residues include Asp535 and Asp539. Transmembrane regions (helical) follow at residues 605–625, 633–653, and 677–697; these read FAII…LNIM, AILS…PLAM, and GGVI…GLFI.

This sequence belongs to the cation transport ATPase (P-type) (TC 3.A.3) family. Type IA subfamily. In terms of assembly, the system is composed of three essential subunits: KdpA, KdpB and KdpC.

The protein resides in the cell membrane. It carries out the reaction K(+)(out) + ATP + H2O = K(+)(in) + ADP + phosphate + H(+). Its function is as follows. Part of the high-affinity ATP-driven potassium transport (or Kdp) system, which catalyzes the hydrolysis of ATP coupled with the electrogenic transport of potassium into the cytoplasm. This subunit is responsible for energy coupling to the transport system and for the release of the potassium ions to the cytoplasm. The polypeptide is Potassium-transporting ATPase ATP-binding subunit (Bacillus mycoides (strain KBAB4) (Bacillus weihenstephanensis)).